A 533-amino-acid polypeptide reads, in one-letter code: Glucose-6-phosphate isomerase (533 aa).

The active-site Proton donor is E322. Catalysis depends on residues H351 and K455.

The protein belongs to the GPI family.

The protein localises to the cytoplasm. It catalyses the reaction alpha-D-glucose 6-phosphate = beta-D-fructose 6-phosphate. It functions in the pathway carbohydrate biosynthesis; gluconeogenesis. The protein operates within carbohydrate degradation; glycolysis; D-glyceraldehyde 3-phosphate and glycerone phosphate from D-glucose: step 2/4. Its function is as follows. Catalyzes the reversible isomerization of glucose-6-phosphate to fructose-6-phosphate. The polypeptide is Glucose-6-phosphate isomerase (Desulfitobacterium hafniense (strain DSM 10664 / DCB-2)).